The sequence spans 137 residues: Small heat shock protein IbpA (137 aa).

One can recognise a sHSP domain in the interval 28–137; it reads SQSNGGYPPY…AKKPRRIEIN (110 aa).

It belongs to the small heat shock protein (HSP20) family. In terms of assembly, monomer. Forms homomultimers of about 100-150 subunits at optimal growth temperatures. Conformation changes to monomers at high temperatures or high ionic concentrations.

It is found in the cytoplasm. Its function is as follows. Associates with aggregated proteins, together with IbpB, to stabilize and protect them from irreversible denaturation and extensive proteolysis during heat shock and oxidative stress. Aggregated proteins bound to the IbpAB complex are more efficiently refolded and reactivated by the ATP-dependent chaperone systems ClpB and DnaK/DnaJ/GrpE. Its activity is ATP-independent. The polypeptide is Small heat shock protein IbpA (Shigella sonnei (strain Ss046)).